The sequence spans 363 residues: MDRRFLFALFLFAAVATAVTDDTNNDDFIIRQVVDNEEDHLLNAEHHFTSFKSKFSKSYATKEEHDYRFGVFKSNLIKAKLHQNRDPTAEHGITKFSDLTASEFRRQFLGLKKRLRLPAHAQKAPILPTTNLPEDFDWREKGAVTPVKDQGSCGSCWAFSTTGALEGAHYLATGKLVSLSEQQLVDCDHVCDPEQAGSCDSGCNGGLMNNAFEYLLESGGVVQEKDYAYTGRDGSCKFDKSKVVASVSNFSVVTLDEDQIAANLVKNGPLAVAINAAWMQTYMSGVSCPYVCAKSRLDHGVLLVGFGKGAYAPIRLKEKPYWIIKNSWGQNWGEQGYYKICRGRNVCGVDSMVSTVAAAQSNH.

An N-terminal signal peptide occupies residues 1–18; that stretch reads MDRRFLFALFLFAAVATA. A propeptide spans 19-131 (activation peptide); the sequence is VTDDTNNDDF…QKAPILPTTN (113 aa). Cystine bridges form between cysteine 153-cysteine 203 and cysteine 187-cysteine 236. Residue cysteine 156 is part of the active site. The N-linked (GlcNAc...) asparagine glycan is linked to asparagine 249. Cysteine 292 and cysteine 347 are disulfide-bonded. Residues histidine 299 and asparagine 326 contribute to the active site.

It belongs to the peptidase C1 family.

This is Cysteine proteinase 15A from Pisum sativum (Garden pea).